Here is a 355-residue protein sequence, read N- to C-terminus: Probable dual-specificity RNA methyltransferase RlmN (355 aa).

The disordered stretch occupies residues 1-20 (MSATPVTQLTPSSQPQQPCS). Glu107 acts as the Proton acceptor in catalysis. The region spanning 113 to 341 (TDKRLTVCVS…VSVRYSRGLE (229 aa)) is the Radical SAM core domain. A disulfide bridge connects residues Cys120 and Cys346. Residues Cys127, Cys131, and Cys134 each coordinate [4Fe-4S] cluster. S-adenosyl-L-methionine-binding positions include 174–175 (GE), Ser204, 227–229 (SLH), and Asn303. Cys346 acts as the S-methylcysteine intermediate in catalysis.

Belongs to the radical SAM superfamily. RlmN family. [4Fe-4S] cluster serves as cofactor.

The protein resides in the cytoplasm. The catalysed reaction is adenosine(2503) in 23S rRNA + 2 reduced [2Fe-2S]-[ferredoxin] + 2 S-adenosyl-L-methionine = 2-methyladenosine(2503) in 23S rRNA + 5'-deoxyadenosine + L-methionine + 2 oxidized [2Fe-2S]-[ferredoxin] + S-adenosyl-L-homocysteine. It catalyses the reaction adenosine(37) in tRNA + 2 reduced [2Fe-2S]-[ferredoxin] + 2 S-adenosyl-L-methionine = 2-methyladenosine(37) in tRNA + 5'-deoxyadenosine + L-methionine + 2 oxidized [2Fe-2S]-[ferredoxin] + S-adenosyl-L-homocysteine. Functionally, specifically methylates position 2 of adenine 2503 in 23S rRNA and position 2 of adenine 37 in tRNAs. The polypeptide is Probable dual-specificity RNA methyltransferase RlmN (Nostoc sp. (strain PCC 7120 / SAG 25.82 / UTEX 2576)).